The chain runs to 119 residues: NADH-quinone oxidoreductase subunit A (119 aa).

Transmembrane regions (helical) follow at residues 7 to 27, 63 to 83, and 88 to 108; these read YPVL…VSIG, LVAI…PWGV, and IGWP…LGFA.

It belongs to the complex I subunit 3 family. As to quaternary structure, NDH-1 is composed of 14 different subunits. Subunits NuoA, H, J, K, L, M, N constitute the membrane sector of the complex.

Its subcellular location is the cell inner membrane. The catalysed reaction is a quinone + NADH + 5 H(+)(in) = a quinol + NAD(+) + 4 H(+)(out). In terms of biological role, NDH-1 shuttles electrons from NADH, via FMN and iron-sulfur (Fe-S) centers, to quinones in the respiratory chain. The immediate electron acceptor for the enzyme in this species is believed to be ubiquinone. Couples the redox reaction to proton translocation (for every two electrons transferred, four hydrogen ions are translocated across the cytoplasmic membrane), and thus conserves the redox energy in a proton gradient. This Burkholderia mallei (strain NCTC 10247) protein is NADH-quinone oxidoreductase subunit A.